The chain runs to 587 residues: Kelch-like protein 3 (587 aa).

Ser10 is subject to Phosphoserine. A BTB domain is found at 50-117 (CDVMIVAEDV…IYTAEIEVTE (68 aa)). The BACK domain maps to 152–254 (CLGIRAFADV…PRDYLVQTVE (103 aa)). A Phosphothreonine modification is found at Thr295. 6 Kelch repeats span residues 302–347 (VMIV…FMAG), 348–394 (HVYA…VLND), 396–441 (LYAV…VVEG), 442–490 (KLYA…VLSG), 491–537 (QLYA…AVNG), and 539–585 (LYVV…VIHK). Thr375 is subject to Phosphothreonine. Ser376 is subject to Phosphoserine. The residue at position 433 (Ser433) is a Phosphoserine; by PKA and PKC.

The protein belongs to the KLHL3 family. In terms of assembly, homodimer. Component of the BCR(KLHL3) E3 ubiquitin ligase complex, at least composed of CUL3 and KLHL3 and RBX1. Interacts with CLDN8. Phosphorylation at Ser-433 by PKA or PKC decreases the interaction with WNK1 and WNK4, leading to inhibit their degradation by the BCR(KLHL3) complex. Phosphorylated at Ser-433 by PKC in response to angiotensin II signaling, decreasing ability to promote degradation of WNK1 and WNK4, leading to activation of Na-Cl cotransporter SLC12A3/NCC. Phosphorylation at Ser-433 is increased by insulin. Dephosphorylated at Ser-433 by calcineurin PPP3CA, promoting degradation of WNK1 and WNK4. As to expression, widely expressed.

The protein resides in the cytoplasm. Its subcellular location is the cytosol. The protein localises to the cytoskeleton. Its pathway is protein modification; protein ubiquitination. Its function is as follows. Substrate-specific adapter of a BCR (BTB-CUL3-RBX1) E3 ubiquitin ligase complex that acts as a regulator of ion transport in the distal nephron. The BCR(KLHL3) complex acts by mediating ubiquitination and degradation of WNK1 and WNK4, two activators of Na-Cl cotransporter SLC12A3/NCC in distal convoluted tubule cells of kidney, thereby regulating NaCl reabsorption. The BCR(KLHL3) complex also mediates ubiquitination and degradation of WNK3. The BCR(KLHL3) complex also mediates ubiquitination of CLDN8, a tight-junction protein required for paracellular chloride transport in the kidney, leading to its degradation. The polypeptide is Kelch-like protein 3 (Homo sapiens (Human)).